A 117-amino-acid chain; its full sequence is Small ribosomal subunit protein uS17 (117 aa).

Residues 97-117 are disordered; that stretch reads AEGLAAAHAGEPETESAATDA.

The protein belongs to the universal ribosomal protein uS17 family. In terms of assembly, part of the 30S ribosomal subunit.

One of the primary rRNA binding proteins, it binds specifically to the 5'-end of 16S ribosomal RNA. The protein is Small ribosomal subunit protein uS17 of Rhodopirellula baltica (strain DSM 10527 / NCIMB 13988 / SH1).